Here is a 61-residue protein sequence, read N- to C-terminus: Large ribosomal subunit protein bL32 (61 aa).

The tract at residues 1–44 is disordered; the sequence is MAVQQNRKSRSRRDMRRSHDALTENALTVDQATGETHRRHHVTK. A compositionally biased stretch (basic residues) spans 7-16; that stretch reads RKSRSRRDMR. Positions 25–34 are enriched in polar residues; the sequence is NALTVDQATG.

It belongs to the bacterial ribosomal protein bL32 family.

The chain is Large ribosomal subunit protein bL32 from Acinetobacter baumannii (strain AB307-0294).